The primary structure comprises 137 residues: NADH-quinone oxidoreductase subunit A (137 aa).

The next 3 helical transmembrane spans lie at 12-32, 66-86, and 95-115; these read WGFA…LGLS, FYLV…LFAW, and WTGF…LVYL.

The protein belongs to the complex I subunit 3 family. As to quaternary structure, NDH-1 is composed of 13 different subunits. Subunits NuoA, H, J, K, L, M, N constitute the membrane sector of the complex.

Its subcellular location is the cell inner membrane. The catalysed reaction is a quinone + NADH + 5 H(+)(in) = a quinol + NAD(+) + 4 H(+)(out). In terms of biological role, NDH-1 shuttles electrons from NADH, via FMN and iron-sulfur (Fe-S) centers, to quinones in the respiratory chain. The immediate electron acceptor for the enzyme in this species is believed to be ubiquinone. Couples the redox reaction to proton translocation (for every two electrons transferred, four hydrogen ions are translocated across the cytoplasmic membrane), and thus conserves the redox energy in a proton gradient. This is NADH-quinone oxidoreductase subunit A from Pseudomonas savastanoi pv. phaseolicola (strain 1448A / Race 6) (Pseudomonas syringae pv. phaseolicola (strain 1448A / Race 6)).